We begin with the raw amino-acid sequence, 180 residues long: MAERMVGKQAPRFEMEAVLASKEFGKVSLEENMKNDKWTVLFFYPMDFTFVCPTEITAMSDRYDEFEDLDAEVIGVSTDTIHTHLAWINTDRKENGLGQLKYPLAADTNHEVSREYGVLIEEEGVALRGLFIINPEGELQYQTVFHNNIGRDVDETLRVLQALQTGGLCPANWKPGQKTL.

One can recognise a Thioredoxin domain in the interval 4–165 (RMVGKQAPRF…TLRVLQALQT (162 aa)). Cys52 acts as the Cysteine sulfenic acid (-SOH) intermediate in catalysis.

This sequence belongs to the peroxiredoxin family. AhpC/Prx1 subfamily. As to quaternary structure, homodimer; disulfide-linked, upon oxidation.

It is found in the cytoplasm. The enzyme catalyses a hydroperoxide + [protein]-dithiol = [protein]-disulfide + an alcohol + H2O. Thiol-specific peroxidase that catalyzes the reduction of hydrogen peroxide and organic hydroperoxides to water and alcohols, respectively. Plays a role in cell protection against oxidative stress by detoxifying peroxides. This is Putative peroxiredoxin YkuU (ykuU) from Bacillus subtilis (strain 168).